Reading from the N-terminus, the 132-residue chain is UPF0047 protein YugU (132 aa).

This sequence belongs to the UPF0047 family.

This is UPF0047 protein YugU (yugU) from Bacillus subtilis (strain 168).